The sequence spans 261 residues: Urease accessory protein UreD (261 aa).

It belongs to the UreD family. In terms of assembly, ureD, UreF and UreG form a complex that acts as a GTP-hydrolysis-dependent molecular chaperone, activating the urease apoprotein by helping to assemble the nickel containing metallocenter of UreC. The UreE protein probably delivers the nickel.

The protein resides in the cytoplasm. In terms of biological role, required for maturation of urease via the functional incorporation of the urease nickel metallocenter. This chain is Urease accessory protein UreD, found in Haemophilus influenzae (strain ATCC 51907 / DSM 11121 / KW20 / Rd).